The following is a 167-amino-acid chain: Multifunctional Ser/Thr-tRNA deacylase ProXp-y (167 aa).

The protein localises to the cytoplasm. The catalysed reaction is L-seryl-tRNA(Lys) + H2O = tRNA(Lys) + L-serine. It catalyses the reaction L-threonyl-tRNA(Lys) + H2O = tRNA(Lys) + L-threonine. It carries out the reaction L-homoseryl-tRNA(Lys) + H2O = tRNA(Lys) + L-homoserine + H(+). The enzyme catalyses L-seryl-tRNA(Ala) + H2O = tRNA(Ala) + L-serine. The catalysed reaction is L-homoseryl-tRNA(Ser) + H2O = tRNA(Ser) + L-homoserine + H(+). It catalyses the reaction L-seryl-tRNA(Thr) + H2O = tRNA(Thr) + L-serine. It carries out the reaction L-threonyl-tRNA(Ile) + H2O = tRNA(Ile) + L-threonine. The enzyme catalyses L-threonyl-tRNA(Val) + H2O = tRNA(Val) + L-threonine. The catalysed reaction is L-threonyl-tRNA(Ser) + H2O = tRNA(Ser) + L-threonine. In terms of biological role, an aminoacyl-tRNA editing enzyme that deacylates Ser-tRNA and/or Thr-tRNA mischarged by lysyl-tRNA synthetase (LysRS), threonyl-tRNA synthetase (ThrRS), seryl-tRNA synthetase (SerRS), alanyl-tRNA synthetase (AlaRS), valyl-tRNA synthetase (ValRS) and isoleucyl-tRNA synthetase (IleRS) in vitro. Also deacylates mischarged Hse-tRNA(Lys) and Hse-tRNA(Ser), and cognate Ser-tRNA(Ser) and Thr-tRNA(Thr) in vitro. The presence of cognate ThrRS abolishes the Thr-tRNA(Thr) deacylase activity, hence this activity is not applicable physiologically. Not able to remove the amino acid moiety from cognate Val-tRNA(Val), Ile-tRNA(Ile), Lys-tRNA(Lys), Ala-tRNA(Ala) or Pro-tRNA(Pro), or from incorrectly charged Ala-tRNA(Pro), Cys-tRNA(Pro) or Leu-tRNA(Pro) in vitro. May be required in vivo to prevent mistranslation and to maintain growth when the error prone stress-inducible lysyl-tRNA synthetase (LysU) is expressed under environmental pressure. The sequence is that of Multifunctional Ser/Thr-tRNA deacylase ProXp-y from Escherichia coli O157:H7.